Reading from the N-terminus, the 418-residue chain is Tektin-1 (418 aa).

Coiled-coil stretches lie at residues 21 to 84, 268 to 308, and 336 to 383; these read KNQY…LEQL, LKET…DQEG, and RLIK…ENTI. The interval 399–418 is disordered; it reads PRDGDDHGEWAGGSHPEAVC.

The protein belongs to the tektin family. In terms of assembly, microtubule inner protein component of sperm flagellar doublet microtubules. Ubiquitinated, leading to its degradation. Deubiquitinated by USP16, promoting its stability. Expressed in trachea multiciliated cells.

It localises to the cytoplasm. It is found in the cytoskeleton. Its subcellular location is the cilium axoneme. The protein resides in the flagellum axoneme. Functionally, microtubule inner protein (MIP) part of the dynein-decorated doublet microtubules (DMTs) in cilia and flagellar axoneme. Forms filamentous polymers in the walls of ciliary and flagellar microtubules. This Bos taurus (Bovine) protein is Tektin-1 (TEKT1).